The following is a 670-amino-acid chain: Leiomodin-3 (670 aa).

Disordered regions lie at residues 34-72, 94-120, 139-165, and 202-274; these read EMDD…EEID, EIAP…GSFD, EEER…EDKV, and EDKV…NWVP. Composition is skewed to basic and acidic residues over residues 40-63, 97-112, 153-163, 205-214, and 249-261; these read PDER…RDCT, PDER…DQTD, TNEEHEAKNED, VCDKPVKTDL, and TETK…KEDS. Positions 150-183 form a coiled coil; that stretch reads SQKTNEEHEAKNEDKVEELELVYEEIVEEVEGGQ. Residues 464–494 are a coiled coil; sequence DRQRQQRMEEQKLQQMKEQRKVMEMYEDSLN. A disordered region spans residues 517–556; sequence NGAEDIPEDSPEPSPQPSPPHQLCKTQHLAPQQHPPNLST. Residues 637-656 enclose the WH2 domain; that stretch reads PRDHLLSEIRQSNVAYLKAV.

It belongs to the tropomodulin family. Expressed in muscle (at protein level).

The protein localises to the cytoplasm. Its subcellular location is the myofibril. It localises to the sarcomere. It is found in the a band. The protein resides in the m line. The protein localises to the cytoskeleton. Essential for the organization of sarcomeric thin filaments in skeletal muscle. The chain is Leiomodin-3 from Danio rerio (Zebrafish).